A 135-amino-acid polypeptide reads, in one-letter code: Agouti-signaling protein (135 aa).

The first 22 residues, 1 to 22, serve as a signal peptide directing secretion; sequence MNILRLLLATLLVCLCLLTAYS. Asn39 is a glycosylation site (N-linked (GlcNAc...) asparagine). Residues 56-101 are disordered; it reads NKKSKKISRKEAEKKRSSKKKASMKNVAQPRRPRPPPPAPCVATRD. 5 disulfides stabilise this stretch: Cys96/Cys111, Cys103/Cys117, Cys110/Cys128, Cys114/Cys135, and Cys119/Cys126. The 40-residue stretch at 96-135 folds into the Agouti domain; sequence CVATRDSCKPPAPACCDPCASCQCRFFRSSCSCRVLNPTC.

It is found in the secreted. Functionally, involved in the regulation of melanogenesis. The binding of ASP to MC1R precludes alpha-MSH initiated signaling and thus blocks production of cAMP, leading to a down-regulation of eumelanogenesis (brown/black pigment) and thus increasing synthesis of pheomelanin (yellow/red pigment). The polypeptide is Agouti-signaling protein (ASIP) (Felis catus (Cat)).